The primary structure comprises 325 residues: Pyruvate dehydrogenase E1 component subunit beta (325 aa).

Residue Glu59 participates in thiamine diphosphate binding.

Heterodimer of an alpha and a beta chain. Requires thiamine diphosphate as cofactor.

It catalyses the reaction N(6)-[(R)-lipoyl]-L-lysyl-[protein] + pyruvate + H(+) = N(6)-[(R)-S(8)-acetyldihydrolipoyl]-L-lysyl-[protein] + CO2. The pyruvate dehydrogenase complex catalyzes the overall conversion of pyruvate to acetyl-CoA and CO(2). It contains multiple copies of three enzymatic components: pyruvate dehydrogenase (E1), dihydrolipoamide acetyltransferase (E2) and lipoamide dehydrogenase (E3). This Rickettsia bellii (strain RML369-C) protein is Pyruvate dehydrogenase E1 component subunit beta (pdhB).